A 160-amino-acid polypeptide reads, in one-letter code: Cytochrome b6-f complex subunit 4 (160 aa).

3 consecutive transmembrane segments (helical) span residues 36 to 56 (LLYI…GLAV), 95 to 115 (LLGV…PFLE), and 131 to 151 (TVFL…TLPI).

The protein belongs to the cytochrome b family. PetD subfamily. In terms of assembly, the 4 large subunits of the cytochrome b6-f complex are cytochrome b6, subunit IV (17 kDa polypeptide, petD), cytochrome f and the Rieske protein, while the 4 small subunits are petG, petL, petM and petN. The complex functions as a dimer.

The protein localises to the plastid. It localises to the chloroplast thylakoid membrane. In terms of biological role, component of the cytochrome b6-f complex, which mediates electron transfer between photosystem II (PSII) and photosystem I (PSI), cyclic electron flow around PSI, and state transitions. The polypeptide is Cytochrome b6-f complex subunit 4 (Solanum tuberosum (Potato)).